A 214-amino-acid chain; its full sequence is Ribosomal RNA small subunit methyltransferase G (214 aa).

Residues Gly-81, Met-86, 132 to 133, and Arg-147 each bind S-adenosyl-L-methionine; that span reads VE.

The protein belongs to the methyltransferase superfamily. RNA methyltransferase RsmG family.

The protein resides in the cytoplasm. It carries out the reaction guanosine(527) in 16S rRNA + S-adenosyl-L-methionine = N(7)-methylguanosine(527) in 16S rRNA + S-adenosyl-L-homocysteine. Specifically methylates the N7 position of guanine in position 527 of 16S rRNA. In Pseudomonas aeruginosa (strain UCBPP-PA14), this protein is Ribosomal RNA small subunit methyltransferase G.